Consider the following 171-residue polypeptide: Acetyltransferase PA2271 (171 aa).

One can recognise an N-acetyltransferase domain in the interval 3–162 (YRIRTSRDED…HEQEIGFAAD (160 aa)). Residues 84–86 (LSI) and 128–130 (PFY) each bind CoA.

Its function is as follows. Catalyzes the transfer of an acetyl group from acetyl coenzyme A (AcCoA) to an acceptor substrate and releases both CoA and the acetylated product. It can use a variety of substrates including spermidine, spermine and N(8)-acetylspermidine, 7-aminocephalosporanic acid, colistin and thiamine. The chain is Acetyltransferase PA2271 from Pseudomonas aeruginosa (strain ATCC 15692 / DSM 22644 / CIP 104116 / JCM 14847 / LMG 12228 / 1C / PRS 101 / PAO1).